Reading from the N-terminus, the 318-residue chain is Inactive dihydropteroate synthase 2 (318 aa).

The interval 1 to 25 (MRSTPPASAGRSTPPALAGHSTPPA) is disordered. Residues 42-299 (ALIMAIVNRT…EVAATRRVLE (258 aa)) form the Pterin-binding domain.

The protein belongs to the DHPS family. In terms of assembly, homodimer.

Functionally, has very low affinity for the DHPS substrate 6-hydroxymethyl-7,8-dihydropterin-pyrophosphate, but can bind the inhibitor dapsone. Seems to lack dihydropteroate synthase activity, and does probably not function in folate metabolism. This Mycobacterium bovis (strain ATCC BAA-935 / AF2122/97) protein is Inactive dihydropteroate synthase 2 (folP2).